The chain runs to 250 residues: Small ribosomal subunit protein uS2 (250 aa).

This sequence belongs to the universal ribosomal protein uS2 family.

This Variovorax paradoxus (strain S110) protein is Small ribosomal subunit protein uS2.